The following is a 132-amino-acid chain: Translation initiation factor 2 subunit beta (132 aa).

Positions 1–30 are disordered; it reads MDYEEQLDRAMDEKPDVTGSETRFEVPDPN.

The protein belongs to the eIF-2-beta/eIF-5 family. In terms of assembly, heterotrimer composed of an alpha, a beta and a gamma chain.

Functionally, eIF-2 functions in the early steps of protein synthesis by forming a ternary complex with GTP and initiator tRNA. In Halobacterium salinarum (strain ATCC 29341 / DSM 671 / R1), this protein is Translation initiation factor 2 subunit beta.